Here is a 214-residue protein sequence, read N- to C-terminus: MKVVAFERSVQGTSASRRLRNSGKTPGIVYGSKDPALVIELDHNALFHALRKEAFHSSILDLEIGGKTQKVLLRDYQMHPFKPLVLHIDFQRVSATKKVHMRVPLHFTNADTSAAVKLQGAVISHIATELEVSYLPADLPEFIEVDLAKIEVGHGIHAKDIALPKGVTLILHVEQENPVLANARIPAVKAAEPTDTPAAPAATAPAADATKVII.

This sequence belongs to the bacterial ribosomal protein bL25 family. CTC subfamily. In terms of assembly, part of the 50S ribosomal subunit; part of the 5S rRNA/L5/L18/L25 subcomplex. Contacts the 5S rRNA. Binds to the 5S rRNA independently of L5 and L18.

Functionally, this is one of the proteins that binds to the 5S RNA in the ribosome where it forms part of the central protuberance. This Polynucleobacter necessarius subsp. necessarius (strain STIR1) protein is Large ribosomal subunit protein bL25.